A 330-amino-acid chain; its full sequence is 7,8-didemethyl-8-hydroxy-5-deazariboflavin synthase (330 aa).

Residues 13–253 enclose the Radical SAM core domain; that stretch reads VTFSKNAFIP…EDISIQVPPN (241 aa). Residues cysteine 27, cysteine 31, and cysteine 34 each coordinate [4Fe-4S] cluster.

This sequence belongs to the radical SAM superfamily. CofG family. Consists of two subunits, CofG and CofH. Requires [4Fe-4S] cluster as cofactor.

It catalyses the reaction 5-amino-5-(4-hydroxybenzyl)-6-(D-ribitylimino)-5,6-dihydrouracil + S-adenosyl-L-methionine = 7,8-didemethyl-8-hydroxy-5-deazariboflavin + 5'-deoxyadenosine + L-methionine + NH4(+) + H(+). It participates in cofactor biosynthesis; coenzyme F0 biosynthesis. In terms of biological role, catalyzes the radical-mediated synthesis of 7,8-didemethyl-8-hydroxy-5-deazariboflavin from 5-amino-5-(4-hydroxybenzyl)-6-(D-ribitylimino)-5,6-dihydrouracil. The sequence is that of 7,8-didemethyl-8-hydroxy-5-deazariboflavin synthase from Methanococcus maripaludis (strain DSM 14266 / JCM 13030 / NBRC 101832 / S2 / LL).